An 82-amino-acid polypeptide reads, in one-letter code: ATP synthase subunit c, chloroplastic (82 aa).

The next 2 membrane-spanning stretches (helical) occupy residues 3 to 23 and 57 to 77; these read PIIS…AAIG and LAFM…LLFA.

This sequence belongs to the ATPase C chain family. In terms of assembly, F-type ATPases have 2 components, F(1) - the catalytic core - and F(0) - the membrane proton channel. F(1) has five subunits: alpha(3), beta(3), gamma(1), delta(1), epsilon(1). F(0) has four main subunits: a(1), b(1), b'(1) and c(10-14). The alpha and beta chains form an alternating ring which encloses part of the gamma chain. F(1) is attached to F(0) by a central stalk formed by the gamma and epsilon chains, while a peripheral stalk is formed by the delta, b and b' chains.

Its subcellular location is the plastid. It localises to the chloroplast thylakoid membrane. Functionally, f(1)F(0) ATP synthase produces ATP from ADP in the presence of a proton or sodium gradient. F-type ATPases consist of two structural domains, F(1) containing the extramembraneous catalytic core and F(0) containing the membrane proton channel, linked together by a central stalk and a peripheral stalk. During catalysis, ATP synthesis in the catalytic domain of F(1) is coupled via a rotary mechanism of the central stalk subunits to proton translocation. In terms of biological role, key component of the F(0) channel; it plays a direct role in translocation across the membrane. A homomeric c-ring of between 10-14 subunits forms the central stalk rotor element with the F(1) delta and epsilon subunits. This Phaeodactylum tricornutum (strain CCAP 1055/1) protein is ATP synthase subunit c, chloroplastic.